Here is a 618-residue protein sequence, read N- to C-terminus: Transport protein particle subunit trs85-2 (618 aa).

The protein belongs to the TRS85 family. In terms of assembly, part of the multisubunit TRAPP (transport protein particle) complexes I and II.

It localises to the golgi apparatus. The protein resides in the cis-Golgi network. Its function is as follows. Component of the TRAPP I and TRAPP II complexes. TRAPP I plays a key role in the late stages of endoplasmic reticulum to Golgi traffic. TRAPP II seems to play a role in intra-Golgi transport. Has a role late in meiosis following DNA replication. The protein is Transport protein particle subunit trs85-2 (trs85-2) of Schizosaccharomyces pombe (strain 972 / ATCC 24843) (Fission yeast).